A 64-amino-acid polypeptide reads, in one-letter code: Makatoxin-1 (64 aa).

The LCN-type CS-alpha/beta domain occupies 2–64 (RDAYIADSEN…VPIRISGSCR (63 aa)). Intrachain disulfides connect cysteine 12–cysteine 63, cysteine 16–cysteine 36, cysteine 22–cysteine 46, and cysteine 26–cysteine 48.

In terms of tissue distribution, expressed by the venom gland.

Its subcellular location is the secreted. Functionally, this protein markedly relaxes the rat carbachol-precontracted anococcygeus muscle. This relaxation is inhibited by the inhibitor of nitric oxide (NO) synthase, N-nitro-L-arginine methyl ester (L-NAME), suggesting that the response induced by this protein is NO-mediated. This chain is Makatoxin-1, found in Olivierus martensii (Manchurian scorpion).